We begin with the raw amino-acid sequence, 32 residues long: 24 kDa flagellin (32 aa).

It belongs to the archaeal flagellin family. Glycosylated.

The protein localises to the archaeal flagellum. Functionally, flagellin is the subunit protein which polymerizes to form the filaments of archaeal flagella. This is 24 kDa flagellin from Methanospirillum hungatei.